Consider the following 313-residue polypeptide: Protein-methionine-sulfoxide reductase catalytic subunit MsrP (313 aa).

A signal peptide (tat-type signal) is located at residues 1–44 (MARWRPDMAEREATPEALYLRRRDFLALGAAGAVGLLLPRGARA). Residues asparagine 76, 79–80 (YE), cysteine 134, threonine 169, asparagine 217, arginine 222, and 233–235 (GAK) contribute to the Mo-molybdopterin site.

This sequence belongs to the MsrP family. In terms of assembly, heterodimer of a catalytic subunit (MsrP) and a heme-binding subunit (MsrQ). Mo-molybdopterin serves as cofactor. In terms of processing, predicted to be exported by the Tat system. The position of the signal peptide cleavage has not been experimentally proven.

The protein localises to the periplasm. It carries out the reaction L-methionyl-[protein] + a quinone + H2O = L-methionyl-(S)-S-oxide-[protein] + a quinol. The enzyme catalyses L-methionyl-[protein] + a quinone + H2O = L-methionyl-(R)-S-oxide-[protein] + a quinol. Part of the MsrPQ system that repairs oxidized periplasmic proteins containing methionine sulfoxide residues (Met-O), using respiratory chain electrons. Thus protects these proteins from oxidative-stress damage caused by reactive species of oxygen and chlorine generated by the host defense mechanisms. MsrPQ is essential for the maintenance of envelope integrity under bleach stress, rescuing a wide series of structurally unrelated periplasmic proteins from methionine oxidation. The catalytic subunit MsrP is non-stereospecific, being able to reduce both (R-) and (S-) diastereoisomers of methionine sulfoxide. This chain is Protein-methionine-sulfoxide reductase catalytic subunit MsrP, found in Anaeromyxobacter dehalogenans (strain 2CP-1 / ATCC BAA-258).